A 125-amino-acid polypeptide reads, in one-letter code: Phosphoribosyl-AMP cyclohydrolase (125 aa).

Asp-74 contacts Mg(2+). A Zn(2+)-binding site is contributed by Cys-75. Residues Asp-76 and Asp-78 each contribute to the Mg(2+) site. Residues Cys-92 and Cys-99 each contribute to the Zn(2+) site.

Belongs to the PRA-CH family. In terms of assembly, homodimer. It depends on Mg(2+) as a cofactor. The cofactor is Zn(2+).

Its subcellular location is the cytoplasm. It catalyses the reaction 1-(5-phospho-beta-D-ribosyl)-5'-AMP + H2O = 1-(5-phospho-beta-D-ribosyl)-5-[(5-phospho-beta-D-ribosylamino)methylideneamino]imidazole-4-carboxamide. It participates in amino-acid biosynthesis; L-histidine biosynthesis; L-histidine from 5-phospho-alpha-D-ribose 1-diphosphate: step 3/9. Its function is as follows. Catalyzes the hydrolysis of the adenine ring of phosphoribosyl-AMP. The polypeptide is Phosphoribosyl-AMP cyclohydrolase (Geobacter metallireducens (strain ATCC 53774 / DSM 7210 / GS-15)).